The sequence spans 26 residues: Hemocyanin subunit B (26 aa).

This sequence belongs to the tyrosinase family. Hemocyanin subfamily. As to expression, hemolymph.

The protein resides in the secreted. Its subcellular location is the extracellular space. Its function is as follows. Hemocyanins are copper-containing oxygen carriers occurring freely dissolved in the hemolymph of many mollusks and arthropods. This Carcinus maenas (Common shore crab) protein is Hemocyanin subunit B.